A 124-amino-acid chain; its full sequence is Small ribosomal subunit protein uS13 (124 aa).

Positions 95–124 (GLPVRGQRTKTNARTRKGPKRTIAGKKKAR) are disordered.

It belongs to the universal ribosomal protein uS13 family. In terms of assembly, part of the 30S ribosomal subunit. Forms a loose heterodimer with protein S19. Forms two bridges to the 50S subunit in the 70S ribosome.

Functionally, located at the top of the head of the 30S subunit, it contacts several helices of the 16S rRNA. In the 70S ribosome it contacts the 23S rRNA (bridge B1a) and protein L5 of the 50S subunit (bridge B1b), connecting the 2 subunits; these bridges are implicated in subunit movement. Contacts the tRNAs in the A and P-sites. In Mycobacteroides abscessus (strain ATCC 19977 / DSM 44196 / CCUG 20993 / CIP 104536 / JCM 13569 / NCTC 13031 / TMC 1543 / L948) (Mycobacterium abscessus), this protein is Small ribosomal subunit protein uS13.